The primary structure comprises 91 residues: Small ribosomal subunit protein uS15 (91 aa).

This sequence belongs to the universal ribosomal protein uS15 family. In terms of assembly, part of the 30S ribosomal subunit. Forms a bridge to the 50S subunit in the 70S ribosome, contacting the 23S rRNA.

One of the primary rRNA binding proteins, it binds directly to 16S rRNA where it helps nucleate assembly of the platform of the 30S subunit by binding and bridging several RNA helices of the 16S rRNA. Its function is as follows. Forms an intersubunit bridge (bridge B4) with the 23S rRNA of the 50S subunit in the ribosome. In Sulfurimonas denitrificans (strain ATCC 33889 / DSM 1251) (Thiomicrospira denitrificans (strain ATCC 33889 / DSM 1251)), this protein is Small ribosomal subunit protein uS15.